Consider the following 589-residue polypeptide: Putative sphingomyelin phosphodiesterase asm-3 (589 aa).

The N-terminal stretch at methionine 1 to alanine 17 is a signal peptide. In terms of domain architecture, Saposin B-type spans valine 18–valine 101. Disulfide bonds link cysteine 21–cysteine 97, cysteine 24–cysteine 89, and cysteine 52–cysteine 63. A glycan (N-linked (GlcNAc...) asparagine) is linked at asparagine 109. Aspartate 139 and histidine 141 together coordinate Zn(2+). 2 disulfides stabilise this stretch: cysteine 154–cysteine 159 and cysteine 160–cysteine 188. A Zn(2+)-binding site is contributed by aspartate 217. Asparagine 237 carries N-linked (GlcNAc...) asparagine glycosylation. Asparagine 257 contacts Zn(2+). Asparagine 334 carries N-linked (GlcNAc...) asparagine glycosylation. Zn(2+)-binding residues include histidine 364, histidine 398, and histidine 400. Residue asparagine 463 is glycosylated (N-linked (GlcNAc...) asparagine). Disulfide bonds link cysteine 530–cysteine 535 and cysteine 541–cysteine 553. The segment at lysine 562–isoleucine 589 is disordered. The segment covering asparagine 578–isoleucine 589 has biased composition (basic and acidic residues).

The protein belongs to the acid sphingomyelinase family. It depends on Zn(2+) as a cofactor.

Its subcellular location is the secreted. The enzyme catalyses an N-(acyl)-sphingosylphosphocholine + H2O = an N-acyl-sphingoid base + phosphocholine + H(+). It catalyses the reaction a sphingomyelin + H2O = phosphocholine + an N-acylsphing-4-enine + H(+). The catalysed reaction is an N-acyl-15-methylhexadecasphing-4-enine-1-phosphocholine + H2O = an N-acyl-15-methylhexadecasphing-4-enine + phosphocholine + H(+). The protein operates within lipid metabolism; sphingolipid metabolism. In terms of biological role, converts sphingomyelin to ceramide (N-acyl-sphingoid base) and phosphocholine. C.elegans contain specific sphingoid bases, which are unique or different in structure compared to the sphingoid bases found in other animals. Two examples of these distinctive compounds are: 15-methylhexadecasphinganine and 15-methylhexadecasphing-4-enine. The sequence is that of Putative sphingomyelin phosphodiesterase asm-3 (asm-3) from Caenorhabditis elegans.